The following is a 351-amino-acid chain: GDP-mannose 4,6-dehydratase (351 aa).

Residues G11 to D16, D66 to M67, L88 to S92, and Y103 each bind NADP(+). T135 is a catalytic residue. Catalysis depends on nucleophile residues E137 and Y159. NADP(+)-binding residues include K163, H189, and R194.

This sequence belongs to the NAD(P)-dependent epimerase/dehydratase family. GDP-mannose 4,6-dehydratase subfamily. The cofactor is NADP(+).

The enzyme catalyses GDP-alpha-D-mannose = GDP-4-dehydro-alpha-D-rhamnose + H2O. It participates in nucleotide-sugar biosynthesis; GDP-L-fucose biosynthesis via de novo pathway; GDP-L-fucose from GDP-alpha-D-mannose: step 1/2. Catalyzes the conversion of GDP-D-mannose to GDP-4-dehydro-6-deoxy-D-mannose. In Sinorhizobium fredii (strain HH103), this protein is GDP-mannose 4,6-dehydratase.